We begin with the raw amino-acid sequence, 546 residues long: Carboxylic ester hydrolase FVEG_12634 (546 aa).

A disordered region spans residues 72–91 (FTDGTKICPQPPSSNTPDPS). The Acyl-ester intermediate role is filled by Ser214.

It belongs to the type-B carboxylesterase/lipase family.

The enzyme catalyses a carboxylic ester + H2O = an alcohol + a carboxylate + H(+). Carboxylic ester hydrolase; part of the Fusarium detoxification of benzoxazolinone cluster 2 (FDB2) involved in the degradation of benzoxazolinones produced by the host plant. Maize, wheat, and rye produce the 2 benzoxazinone phytoanticipins 2,4-dihy-droxy-7-methoxy-1,4-benzoxazin-3-one (DIMBOA) and 2,4-dihydroxy-1,4-benzoxazin-3-one (DIBOA) that, due to their inherent instability once released, spontaneously degrade to the more stable corresponding benzoxazolinones, 6-methoxy-2-benzoxazolinone (MBOA) and 2-benzoxazolinone (BOA), respectively. The first step in the detoxification of benzoxazolinones involves the hydrolysis of the cyclic ester bond of benzoxazolinones by the FDB1 cluster gamma-lactamase MBL1 to aminophenols. MBL1 is able to convert BOA into 2-aminophenol (2-AP), as well as MBOA into 5-methoxy-2-aminophenol (2-AMP). The FDB2 cluster N-malonyltransferase FDB2/NAT1 then metabolizes aminophenols via N-malonylation to non-toxic malonamic acids. FDB2/NAT1 converts 2-AP into N-(2-hydroxyphenyl) malonamic acid (HPMA) and 2-AMP into N-(2-hydroxy-4-methoxyphenyl) malonamic acid (HMPMA). The duplicated dienlactone hydrolases DLH1 and DLH2 may provide redundant function for hydrolyzing the lactone moiety in the BOA molecule. The roles of the amidases an other enzymes encoded by the 2 FDB clusters have not been identified so far. The polypeptide is Carboxylic ester hydrolase FVEG_12634 (Gibberella moniliformis (strain M3125 / FGSC 7600) (Maize ear and stalk rot fungus)).